The following is a 534-amino-acid chain: Zinc finger protein 703-A (534 aa).

3 disordered regions span residues 1 to 35 (MNCS…THPV), 90 to 251 (SQIG…VAPV), and 300 to 320 (QLPG…LTGA). Composition is skewed to low complexity over residues 15–34 (QSSS…PTHP), 115–124 (RSSSLKLGES), and 146–155 (GSSAGGSADK). A compositionally biased stretch (polar residues) spans 173 to 182 (SPSSRVSSPG). Over residues 185–200 (CDSKNNESQEKKEPEA) the composition is skewed to basic and acidic residues. A compositionally biased stretch (polar residues) spans 204 to 217 (SLETSQANPTLTRA). Residues 218-229 (SISNSSAESSQS) are compositionally biased toward low complexity. Residues 230 to 239 (GDVTPSSKSD) show a composition bias toward polar residues. The C2H2-type zinc finger occupies 406 to 434 (HICNWVSASGPCDKRFATSEELLAHLRTH).

It belongs to the Elbow/Noc family.

It localises to the nucleus. Its subcellular location is the cytoplasm. In terms of biological role, transcriptional corepressor which does not bind directly to DNA and may regulate transcription through recruitment of histone deacetylases to gene promoters. Regulates cell adhesion, migration and proliferation. Involved in specification of the lateral neural plate border (NPB). May be required for segmental gene expression during hindbrain development. The protein is Zinc finger protein 703-A (znf703-a) of Xenopus laevis (African clawed frog).